The chain runs to 156 residues: ATP synthase subunit b 1 (156 aa).

The chain crosses the membrane as a helical span at residues 7-29; it reads LLGQAISFALFVWFCMKYVWPPL.

Belongs to the ATPase B chain family. In terms of assembly, F-type ATPases have 2 components, F(1) - the catalytic core - and F(0) - the membrane proton channel. F(1) has five subunits: alpha(3), beta(3), gamma(1), delta(1), epsilon(1). F(0) has three main subunits: a(1), b(2) and c(10-14). The alpha and beta chains form an alternating ring which encloses part of the gamma chain. F(1) is attached to F(0) by a central stalk formed by the gamma and epsilon chains, while a peripheral stalk is formed by the delta and b chains.

The protein resides in the cell inner membrane. F(1)F(0) ATP synthase produces ATP from ADP in the presence of a proton or sodium gradient. F-type ATPases consist of two structural domains, F(1) containing the extramembraneous catalytic core and F(0) containing the membrane proton channel, linked together by a central stalk and a peripheral stalk. During catalysis, ATP synthesis in the catalytic domain of F(1) is coupled via a rotary mechanism of the central stalk subunits to proton translocation. Functionally, component of the F(0) channel, it forms part of the peripheral stalk, linking F(1) to F(0). This Vibrio campbellii (strain ATCC BAA-1116) protein is ATP synthase subunit b 1.